The following is a 136-amino-acid chain: ATP synthase epsilon chain (136 aa).

Positions 112–136 are disordered; the sequence is GNSADKLKAKESLNKARARSQAVGE. Basic and acidic residues predominate over residues 116-125; sequence DKLKAKESLN.

Belongs to the ATPase epsilon chain family. F-type ATPases have 2 components, CF(1) - the catalytic core - and CF(0) - the membrane proton channel. CF(1) has five subunits: alpha(3), beta(3), gamma(1), delta(1), epsilon(1). CF(0) has three main subunits: a, b and c.

The protein localises to the cellular thylakoid membrane. Functionally, produces ATP from ADP in the presence of a proton gradient across the membrane. In Prochlorococcus marinus (strain SARG / CCMP1375 / SS120), this protein is ATP synthase epsilon chain.